The sequence spans 236 residues: 1-(5-phosphoribosyl)-5-[(5-phosphoribosylamino)methylideneamino] imidazole-4-carboxamide isomerase (236 aa).

The active-site Proton acceptor is Asp8. Asp129 functions as the Proton donor in the catalytic mechanism.

It belongs to the HisA/HisF family.

It localises to the cytoplasm. It carries out the reaction 1-(5-phospho-beta-D-ribosyl)-5-[(5-phospho-beta-D-ribosylamino)methylideneamino]imidazole-4-carboxamide = 5-[(5-phospho-1-deoxy-D-ribulos-1-ylimino)methylamino]-1-(5-phospho-beta-D-ribosyl)imidazole-4-carboxamide. Its pathway is amino-acid biosynthesis; L-histidine biosynthesis; L-histidine from 5-phospho-alpha-D-ribose 1-diphosphate: step 4/9. The sequence is that of 1-(5-phosphoribosyl)-5-[(5-phosphoribosylamino)methylideneamino] imidazole-4-carboxamide isomerase from Ruminiclostridium cellulolyticum (strain ATCC 35319 / DSM 5812 / JCM 6584 / H10) (Clostridium cellulolyticum).